Here is a 138-residue protein sequence, read N- to C-terminus: Putative pre-16S rRNA nuclease (138 aa).

It belongs to the YqgF nuclease family.

It is found in the cytoplasm. In terms of biological role, could be a nuclease involved in processing of the 5'-end of pre-16S rRNA. In Cronobacter sakazakii (strain ATCC BAA-894) (Enterobacter sakazakii), this protein is Putative pre-16S rRNA nuclease.